Here is a 535-residue protein sequence, read N- to C-terminus: Dimethylaniline monooxygenase [N-oxide-forming] 2 (535 aa).

Ala-2 carries the N-acetylalanine modification. FAD-binding positions include 9 to 13, Glu-32, 40 to 41, and 61 to 62; these read GAGVS, VW, and NT. Residues 60–61 and 195–198 contribute to the NADP(+) site; these read TN and SGSD. Residue Lys-492 forms a Glycyl lysine isopeptide (Lys-Gly) (interchain with G-Cter in SUMO) linkage. The chain crosses the membrane as a helical span at residues 510–530; it reads FPVSFLLKILGLVAVVVAFFC.

Belongs to the FMO family. FAD serves as cofactor. It depends on Mg(2+) as a cofactor.

The protein resides in the microsome membrane. Its subcellular location is the endoplasmic reticulum membrane. The catalysed reaction is N,N-dimethylaniline + NADPH + O2 + H(+) = N,N-dimethylaniline N-oxide + NADP(+) + H2O. Its function is as follows. Catalyzes the oxidative metabolism of numerous xenobiotics, including mainly therapeutic drugs and insecticides that contain a soft nucleophile, most commonly nitrogen and sulfur and participates to their bioactivation. The sequence is that of Dimethylaniline monooxygenase [N-oxide-forming] 2 from Macaca mulatta (Rhesus macaque).